Here is a 479-residue protein sequence, read N- to C-terminus: Aspartyl/glutamyl-tRNA(Asn/Gln) amidotransferase subunit B (479 aa).

The protein belongs to the GatB/GatE family. GatB subfamily. Heterotrimer of A, B and C subunits.

The enzyme catalyses L-glutamyl-tRNA(Gln) + L-glutamine + ATP + H2O = L-glutaminyl-tRNA(Gln) + L-glutamate + ADP + phosphate + H(+). It catalyses the reaction L-aspartyl-tRNA(Asn) + L-glutamine + ATP + H2O = L-asparaginyl-tRNA(Asn) + L-glutamate + ADP + phosphate + 2 H(+). Its function is as follows. Allows the formation of correctly charged Asn-tRNA(Asn) or Gln-tRNA(Gln) through the transamidation of misacylated Asp-tRNA(Asn) or Glu-tRNA(Gln) in organisms which lack either or both of asparaginyl-tRNA or glutaminyl-tRNA synthetases. The reaction takes place in the presence of glutamine and ATP through an activated phospho-Asp-tRNA(Asn) or phospho-Glu-tRNA(Gln). The sequence is that of Aspartyl/glutamyl-tRNA(Asn/Gln) amidotransferase subunit B from Halorhodospira halophila (strain DSM 244 / SL1) (Ectothiorhodospira halophila (strain DSM 244 / SL1)).